A 206-amino-acid chain; its full sequence is Large ribosomal subunit protein uL4 (206 aa).

Positions 60–84 are disordered; sequence TAKPFKQKGTGHARQGSKRSPQFRG. Residues 64–76 show a composition bias toward basic residues; the sequence is FKQKGTGHARQGS.

It belongs to the universal ribosomal protein uL4 family. In terms of assembly, part of the 50S ribosomal subunit.

Functionally, one of the primary rRNA binding proteins, this protein initially binds near the 5'-end of the 23S rRNA. It is important during the early stages of 50S assembly. It makes multiple contacts with different domains of the 23S rRNA in the assembled 50S subunit and ribosome. In terms of biological role, forms part of the polypeptide exit tunnel. The polypeptide is Large ribosomal subunit protein uL4 (Rhodospirillum rubrum (strain ATCC 11170 / ATH 1.1.1 / DSM 467 / LMG 4362 / NCIMB 8255 / S1)).